A 169-amino-acid polypeptide reads, in one-letter code: Ribosomal RNA large subunit methyltransferase H (169 aa).

S-adenosyl-L-methionine contacts are provided by residues leucine 85, glycine 117, and 136–141 (LGELTW).

This sequence belongs to the RNA methyltransferase RlmH family. Homodimer.

It is found in the cytoplasm. It carries out the reaction pseudouridine(1915) in 23S rRNA + S-adenosyl-L-methionine = N(3)-methylpseudouridine(1915) in 23S rRNA + S-adenosyl-L-homocysteine + H(+). Its function is as follows. Specifically methylates the pseudouridine at position 1915 (m3Psi1915) in 23S rRNA. This Brucella ovis (strain ATCC 25840 / 63/290 / NCTC 10512) protein is Ribosomal RNA large subunit methyltransferase H.